Here is a 138-residue protein sequence, read N- to C-terminus: Large ribosomal subunit protein uL13 (138 aa).

Belongs to the universal ribosomal protein uL13 family. As to quaternary structure, part of the 50S ribosomal subunit.

In terms of biological role, this protein is one of the early assembly proteins of the 50S ribosomal subunit, although it is not seen to bind rRNA by itself. It is important during the early stages of 50S assembly. This Picrophilus torridus (strain ATCC 700027 / DSM 9790 / JCM 10055 / NBRC 100828 / KAW 2/3) protein is Large ribosomal subunit protein uL13.